Reading from the N-terminus, the 1437-residue chain is DNA polymerase III PolC-type (1437 aa).

In terms of domain architecture, Exonuclease spans 420–576 (YVIFDVETTG…YDSETTGHLC (157 aa)).

It belongs to the DNA polymerase type-C family. PolC subfamily.

Its subcellular location is the cytoplasm. The enzyme catalyses DNA(n) + a 2'-deoxyribonucleoside 5'-triphosphate = DNA(n+1) + diphosphate. Required for replicative DNA synthesis. This DNA polymerase also exhibits 3' to 5' exonuclease activity. In Pediococcus pentosaceus (strain ATCC 25745 / CCUG 21536 / LMG 10740 / 183-1w), this protein is DNA polymerase III PolC-type.